The sequence spans 406 residues: Arginine decarboxylase (406 aa).

Lys8 is subject to N6-(pyridoxal phosphate)lysine. 192 to 202 contacts substrate; the sequence is VDFGGGLGIDY.

The protein belongs to the Orn/Lys/Arg decarboxylase class-II family. SpeA subfamily. It depends on pyridoxal 5'-phosphate as a cofactor. Mg(2+) serves as cofactor.

The catalysed reaction is L-arginine + H(+) = agmatine + CO2. It participates in amine and polyamine biosynthesis; agmatine biosynthesis; agmatine from L-arginine: step 1/1. This is Arginine decarboxylase (SPE2) from Theobroma cacao (Cacao).